The chain runs to 259 residues: Large ribosomal subunit protein uL4 (259 aa).

The disordered stretch occupies residues 47–67; it reads WGTDPMAGKRTTAESFGSGRG.

Belongs to the universal ribosomal protein uL4 family. Part of the 50S ribosomal subunit.

Its function is as follows. One of the primary rRNA binding proteins, this protein initially binds near the 5'-end of the 23S rRNA. It is important during the early stages of 50S assembly. It makes multiple contacts with different domains of the 23S rRNA in the assembled 50S subunit and ribosome. In terms of biological role, forms part of the polypeptide exit tunnel. The chain is Large ribosomal subunit protein uL4 from Methanosphaera stadtmanae (strain ATCC 43021 / DSM 3091 / JCM 11832 / MCB-3).